The primary structure comprises 29 residues: Trypsin inhibitor 3 (29 aa).

3 disulfides stabilise this stretch: Cys-3/Cys-20, Cys-10/Cys-22, and Cys-16/Cys-28.

This sequence belongs to the protease inhibitor I7 (squash-type serine protease inhibitor) family.

The protein resides in the secreted. Functionally, strongly inhibits trypsin, weakly inhibits chymotrypsin. This Cyclanthera pedata (Achocha) protein is Trypsin inhibitor 3.